The sequence spans 331 residues: MTLAHSLSFPDSLRDGPTVGDLGEFEVIRVITEQAGSSLNGDDAAVLRHASPNSRAVVTTDMLVAGRHFQLDWSTPEQIGQKAIVQNFADIEAMGARPVAALLAISAPTHTPVEFVRGLARGMNQRLEEYSAELVGGDITSGDSLVIAVTAIGQLGGSLPELTLGRARPGQTLVAHGKIGYSAAGLALLQHFGPDNVPEHLRPLVDAHCAPVLTPGRGMVARAAGATAMTDNSDGLIVDLNQMAMKSGVRIDVDSSSISPDELLSEAASVLGTDAWRWILSGGEDHTLLSTTFGDAPSGFRTIGQVTKTRHEDLVTVDKKTPAFSDGWRSF.

Residues Asp43, Thr59, Thr60, and Asp61 each contribute to the Mg(2+) site. Position 68 (His68) interacts with substrate. Mg(2+)-binding residues include Asp90, Asp138, and Asp231. 137 to 138 contacts ATP; sequence GD. ATP is bound at residue Ser233. Asp234 is a Mg(2+) binding site. Residues Glu284 and Trp328 each coordinate substrate.

Belongs to the thiamine-monophosphate kinase family.

The catalysed reaction is thiamine phosphate + ATP = thiamine diphosphate + ADP. Its pathway is cofactor biosynthesis; thiamine diphosphate biosynthesis; thiamine diphosphate from thiamine phosphate: step 1/1. In terms of biological role, catalyzes the ATP-dependent phosphorylation of thiamine-monophosphate (TMP) to form thiamine-pyrophosphate (TPP), the active form of vitamin B1. The sequence is that of Thiamine-monophosphate kinase from Corynebacterium glutamicum (strain ATCC 13032 / DSM 20300 / JCM 1318 / BCRC 11384 / CCUG 27702 / LMG 3730 / NBRC 12168 / NCIMB 10025 / NRRL B-2784 / 534).